The sequence spans 602 residues: Aryl hydrocarbon receptor protein 1 (602 aa).

The propeptide occupies 1-2 (MY). The span at 1 to 12 (MYASKRRQRNFK) shows a compositional bias: basic residues. The disordered stretch occupies residues 1–28 (MYASKRRQRNFKRVRDPPKQLTNTNPSK). 2 consecutive short sequence motifs (nuclear localization signal) follow at residues 5–8 (KRRQ) and 28–33 (KRHRER). In terms of domain architecture, bHLH spans 18–71 (PKQLTNTNPSKRHRERLNGELETVAMLLPYDSSTISRLDKLSVLRLAVSFLQCK). 3 required for maintaining the overall integrity of the AHR:ARNT heterodimer and its transcriptional activity regions span residues 41–73 (VAML…CKAH), 133–141 (SLKSLGGFI), and 266–268 (ICV). A Nuclear export signal motif is present at residues 55–63 (LDKLSVLRL). A PAS domain is found at 126–196 (ESNFEEISLK…QQLDSNFHIP (71 aa)). A disordered region spans residues 440–467 (STSNSLFPSVPVPTPTTTKANRRRKENS).

Interacts with daf-21/hsp90. Interacts with aha-1. As to expression, expressed in many distinct neuronal cells including RMED, RMEV, RMEL and RMER. Functions in URX neurons to promote aggregation behavior.

The protein localises to the nucleus. In terms of biological role, probable ligand-activated transcriptional activator. Acts as a transcriptional regulator in GABAergic motor neuron cell fate specification and development. Promotes cell-type-specific expression of guanylate cyclase genes that have key roles in aggregation behavior and hyperoxia avoidance. Has no role in carbon dioxide avoidance. This is Aryl hydrocarbon receptor protein 1 from Caenorhabditis elegans.